Reading from the N-terminus, the 364-residue chain is Apelin receptor (364 aa).

The Extracellular portion of the chain corresponds to 1–39 (MATDEFSSSTTPSYDYYDYTNESGLPPCDETDWDLSYSL). The N-linked (GlcNAc...) asparagine glycan is linked to asparagine 21. Cystine bridges form between cysteine 28–cysteine 288 and cysteine 110–cysteine 187. Residues 40–60 (LPVFYMIVFVLGLSGNGVVIF) traverse the membrane as a helical segment. Residues 61–78 (TVWKAKPKRRSADTYIGN) lie on the Cytoplasmic side of the membrane. A helical membrane pass occupies residues 79–99 (LALADLAFVVTLPLWATYTAL). Residues 100 to 112 (GFHWPFGSALCKL) lie on the Extracellular side of the membrane. A helical membrane pass occupies residues 113 to 133 (SSYLVLLNMFASVFCLTCLSF). Residues 134–153 (DRYLAIVHSLSSAKLRSRSS) lie on the Cytoplasmic side of the membrane. The helical transmembrane segment at 154–174 (ILVSLAVIWLFSGLLALPSLI) threads the bilayer. Topologically, residues 175 to 201 (LRDTRVEGNNTICDLDFSGVSSKENEN) are extracellular. Asparagine 183 carries an N-linked (GlcNAc...) asparagine glycan. A helical membrane pass occupies residues 202–222 (FWIGGLSILTTVPGFLLPLLL). Residues 223-250 (MTIFYCFIGGKVTMHFQNLKKEEQKKKR) are Cytoplasmic-facing. The helical transmembrane segment at 251-271 (LLKIIITLVVVFAICWLPFHI) threads the bilayer. Residues 272–298 (LKTIHFLDLMGFLELSCSTQNIIVSLH) lie on the Extracellular side of the membrane. Residues 299–319 (PYATCLAYINSCLNPFLYAFF) form a helical membrane-spanning segment. The Cytoplasmic segment spans residues 320 to 364 (DLRFRSQCFFFFGFKKALQGHLSNTSSSLSAQTQKSEIHSLATKV).

The protein belongs to the G-protein coupled receptor 1 family.

Its subcellular location is the cell membrane. Functionally, g protein-coupled receptor for peptide hormones apelin (apln) and apelin receptor early endogenous ligand (apela), that plays a role in the regulation of normal cardiovascular function and fluid homeostasis. When acting as apelin receptor, activates both G(i) protein pathway that inhibits adenylate cyclase activity, and the beta-arrestin pathway that promotes internalization of the receptor. Also functions as mechanoreceptor that is activated by pathological stimuli in a G-protein-independent fashion to induce beta-arrestin signaling, hence eliciting cardiac hypertrophy. However, the presence of apelin ligand blunts cardiac hypertrophic induction from APLNR/APJ on response to pathological stimuli. Plays a key role in early development such as gastrulation, blood vessels formation and heart morphogenesis by acting as a receptor for apela hormone, promoting endoderm and mesendoderm cell migration and regulating the migration of cells fated to become myocardial progenitors, respectively. Promotes angioblast migration toward the embryonic midline, i.e. the position of the future vessel formation, during vasculogenesis. May promote sinus venosus (SV)-derived endothelial cells migration into the developing heart to promote coronary blood vessel development. Required for cardiovascular development, particularly for intersomitic vein angiogenesis. Plays also a role in various processes in adults such as regulation of blood vessel formation, blood pressure, heart contractility, and heart failure. Acts upstream of the i/o type of G-alpha proteins in the differentiation of endothelium, erythroid cells, myeloid cells and cardiomyocytes. The sequence is that of Apelin receptor (aplnr) from Xenopus tropicalis (Western clawed frog).